A 209-amino-acid polypeptide reads, in one-letter code: MSKVTQIAHPLILHKLAIIRNKNTGSKDFRELVEEVAMLMAYEVTRDLPLEEVEIETPICKTKCKMLSGKKMAIVPILRAGLGMVDGMLKLIPAAKVGHIGMYRDEETFKPVEYFCKMPQDIHERDIIVTDPMLATGGSAIDAINALKKRGAKSIRLMCLISSPEGIKAVMDAHPDVDIYVGDIDERLNEHGYIIPGLGDAGDRLFGTK.

Residues arginine 79, arginine 104, and aspartate 131–serine 139 contribute to the 5-phospho-alpha-D-ribose 1-diphosphate site. Residues isoleucine 194 and glycine 199 to alanine 201 each bind uracil. Residue aspartate 200 participates in 5-phospho-alpha-D-ribose 1-diphosphate binding.

The protein belongs to the UPRTase family. It depends on Mg(2+) as a cofactor.

The enzyme catalyses UMP + diphosphate = 5-phospho-alpha-D-ribose 1-diphosphate + uracil. Its pathway is pyrimidine metabolism; UMP biosynthesis via salvage pathway; UMP from uracil: step 1/1. Its activity is regulated as follows. Allosterically activated by GTP. Functionally, catalyzes the conversion of uracil and 5-phospho-alpha-D-ribose 1-diphosphate (PRPP) to UMP and diphosphate. The chain is Uracil phosphoribosyltransferase from Clostridium novyi (strain NT).